The following is a 109-amino-acid chain: T cell receptor alpha variable 27 (109 aa).

The first 19 residues, 1–19, serve as a signal peptide directing secretion; it reads MVLKFSVSILWIQLAWVST. Positions 20–109 constitute an Ig-like domain; the sequence is QLLEQSPQFL…GDTGLYLCAG (90 aa). Residues N36 and N42 are each glycosylated (N-linked (GlcNAc...) asparagine). C41 and C107 form a disulfide bridge.

In terms of assembly, alpha-beta TR is a heterodimer composed of an alpha and beta chain; disulfide-linked. The alpha-beta TR is associated with the transmembrane signaling CD3 coreceptor proteins to form the TR-CD3 (TcR or TCR). The assembly of alpha-beta TR heterodimers with CD3 occurs in the endoplasmic reticulum where a single alpha-beta TR heterodimer associates with one CD3D-CD3E heterodimer, one CD3G-CD3E heterodimer and one CD247 homodimer forming a stable octameric structure. CD3D-CD3E and CD3G-CD3E heterodimers preferentially associate with TR alpha and TR beta chains, respectively. The association of the CD247 homodimer is the last step of TcR assembly in the endoplasmic reticulum and is required for transport to the cell surface. As to quaternary structure, (Microbial infection) Interacts with Staphylococcus aureus enterotoxin H/entH.

It is found in the cell membrane. Functionally, v region of the variable domain of T cell receptor (TR) alpha chain that participates in the antigen recognition. Alpha-beta T cell receptors are antigen specific receptors which are essential to the immune response and are present on the cell surface of T lymphocytes. Recognize peptide-major histocompatibility (MH) (pMH) complexes that are displayed by antigen presenting cells (APC), a prerequisite for efficient T cell adaptive immunity against pathogens. Binding of alpha-beta TR to pMH complex initiates TR-CD3 clustering on the cell surface and intracellular activation of LCK that phosphorylates the ITAM motifs of CD3G, CD3D, CD3E and CD247 enabling the recruitment of ZAP70. In turn, ZAP70 phosphorylates LAT, which recruits numerous signaling molecules to form the LAT signalosome. The LAT signalosome propagates signal branching to three major signaling pathways, the calcium, the mitogen-activated protein kinase (MAPK) kinase and the nuclear factor NF-kappa-B (NF-kB) pathways, leading to the mobilization of transcription factors that are critical for gene expression and essential for T cell growth and differentiation. The T cell repertoire is generated in the thymus, by V-(D)-J rearrangement. This repertoire is then shaped by intrathymic selection events to generate a peripheral T cell pool of self-MH restricted, non-autoaggressive T cells. Post-thymic interaction of alpha-beta TR with the pMH complexes shapes TR structural and functional avidity. The polypeptide is T cell receptor alpha variable 27 (Homo sapiens (Human)).